Here is a 55-residue protein sequence, read N- to C-terminus: Large ribosomal subunit protein bL33B (55 aa).

It belongs to the bacterial ribosomal protein bL33 family.

This is Large ribosomal subunit protein bL33B from Mycobacteroides abscessus (strain ATCC 19977 / DSM 44196 / CCUG 20993 / CIP 104536 / JCM 13569 / NCTC 13031 / TMC 1543 / L948) (Mycobacterium abscessus).